A 127-amino-acid polypeptide reads, in one-letter code: Thioredoxin (127 aa).

The Thioredoxin domain maps to 2–115 (SDGVKHINSA…LRAAAEKMGR (114 aa)). Active-site nucleophile residues include Cys33 and Cys36. Cys33 and Cys36 are oxidised to a cystine.

It belongs to the thioredoxin family.

In terms of biological role, participates in various redox reactions through the reversible oxidation of its active center dithiol to a disulfide and catalyzes dithiol-disulfide exchange reactions. This is Thioredoxin (trx) from Neurospora crassa (strain ATCC 24698 / 74-OR23-1A / CBS 708.71 / DSM 1257 / FGSC 987).